Here is a 390-residue protein sequence, read N- to C-terminus: Neuromedin-B receptor (390 aa).

Residues 1–20 (MPPRSLPNLSLPTEASESEL) form a disordered region. The Extracellular segment spans residues 1–41 (MPPRSLPNLSLPTEASESELEPEVWENDFLPDSDGTTAELV). The N-linked (GlcNAc...) asparagine glycan is linked to Asn8. The chain crosses the membrane as a helical span at residues 42 to 65 (IRCVIPSLYLIIISVGLLGNIMLV). Topologically, residues 66–79 (KIFLTNSTMRSVPN) are cytoplasmic. The chain crosses the membrane as a helical span at residues 80–99 (IFISNLAAGDLLLLLTCVPV). The Extracellular segment spans residues 100-117 (DASRYFFDEWVFGKLGCK). Cys116 and Cys198 form a disulfide bridge. A helical membrane pass occupies residues 118–139 (LIPAIQLTSVGVSVFTLTALSA). Over 140–156 (DRYRAIVNPMDMQTSGV) the chain is Cytoplasmic. Residues 157-177 (VLWTSLKAVGIWVVSVLLAVP) traverse the membrane as a helical segment. Residues 178-211 (EAVFSEVARIGSSDNSSFTACIPYPQTDELHPKI) lie on the Extracellular side of the membrane. The N-linked (GlcNAc...) asparagine glycan is linked to Asn192. A helical membrane pass occupies residues 212-235 (HSVLIFLVYFLIPLVIISIYYYHI). The Cytoplasmic segment spans residues 236–266 (AKTLIRSAHNLPGEYNEHTKKQMETRKRLAK). A helical transmembrane segment spans residues 267–287 (IVLVFVGCFVFCWFPNHILYL). At 288–299 (YRSFNYKEIDPS) the chain is on the extracellular side. A helical membrane pass occupies residues 300 to 327 (LGHMIVTLVARVLSFSNSCVNPFALYLL). Over 328-390 (SESFRKHFNS…GHSTKQEIAL (63 aa)) the chain is Cytoplasmic. Residue Cys341 is the site of S-palmitoyl cysteine attachment. Ser352 carries the phosphoserine modification.

Belongs to the G-protein coupled receptor 1 family. In terms of tissue distribution, brain (olfactory bulb and central thalamic regions), and esophagus.

It is found in the cell membrane. Its function is as follows. Receptor for neuromedin-B. Contributes to the maintenance of basal sigh rate through signaling in the pre-Botzinger complex, a cluster of several thousand neurons in the ventrolateral medulla responsible for inspiration during respiratory activity. Contributes to the induction of sneezing following exposure to chemical irritants or allergens which causes release of NMB by nasal sensory neurons and activation of NMBR-expressing neurons in the sneeze-evoking region of the brainstem. These in turn activate neurons of the caudal ventral respiratory group, giving rise to the sneezing response. Contributes to induction of acute itch, possibly through its activation on dorsal root ganglion neurons by the NMB peptide. Plays a role in the innate immune response to influenza A virus infection by enhancing interferon alpha expression and reducing expression of IL6. Plays a role in CSF1-induced proliferation of osteoclast precursors by contributing to the positive regulation of the expression of the CSF1 receptor CSF1R. This chain is Neuromedin-B receptor (Nmbr), found in Rattus norvegicus (Rat).